The following is a 492-amino-acid chain: Fumarate hydratase 1, mitochondrial (492 aa).

Residues 1-28 constitute a mitochondrion transit peptide; the sequence is MSIYVASRRLSGGTTVTALRYATSLRSY. Substrate is bound by residues 127–129, 157–160, 167–169, and Thr-215; these read SGT, HPND, and SSN. His-216 functions as the Proton donor/acceptor in the catalytic mechanism. Residue Ser-346 is part of the active site. Substrate contacts are provided by residues Ser-347 and 352–354; that span reads KVN.

Belongs to the class-II fumarase/aspartase family. Fumarase subfamily. Homotetramer.

It localises to the mitochondrion. It carries out the reaction (S)-malate = fumarate + H2O. It functions in the pathway carbohydrate metabolism; tricarboxylic acid cycle; (S)-malate from fumarate: step 1/1. Fumarate hydratase activity (fumarate to L-malate) is strongly inhibited by phosphoenolpyruvate, citrate, oxaloacetate, ATP and ADP. Malate dehydratase activity (malate to fumarate) is activated by oxaloacetate, pyruvate, Asn and Gln. Malate dehydratase activity (malate to fumarate) is inhibited by citrate, succinate, ADP, ATP, glucose-6P and phosphoenolpyruvate. Functionally, catalyzes the reversible stereospecific interconversion of fumarate to L-malate. Catalyzes the hydration of fumarate to L-malate in the tricarboxylic acid (TCA) cycle to facilitate a transition step in the production of energy in the form of NADH. The protein is Fumarate hydratase 1, mitochondrial of Arabidopsis thaliana (Mouse-ear cress).